The following is a 1034-amino-acid chain: Tubulin glycylase 3D (1034 aa).

2 stretches are compositionally biased toward polar residues: residues 1-13 (MINS…QTLN) and 131-146 (QVNS…QNDF). Disordered stretches follow at residues 1–21 (MINS…SQMD), 131–166 (QVNS…STDY), and 189–208 (LNQQ…DNSQ). Residues 151 to 161 (RKPKNPTTKKR) are compositionally biased toward basic residues. Over residues 189-199 (LNQQNQQQQDL) the composition is skewed to low complexity. The TTL domain maps to 571–930 (DINNVIDDEK…YGMAQKSGIK (360 aa)). Residues 741–744 (QKYI), lysine 754, and aspartate 756 each bind ATP. The tract at residues 1002 to 1034 (HDQKQFSSQQANNIETYSRPQTAKSQTQSSKKL) is disordered.

Its subcellular location is the cytoplasm. Its function is as follows. Probable glycylase which modifies tubulin, generating side chains of glycine on the gamma-carboxyl groups of specific glutamate residues within the C-terminal tail of tubulin. This is Tubulin glycylase 3D (TTLL3D) from Tetrahymena thermophila (strain SB210).